Reading from the N-terminus, the 417-residue chain is Metal-binding activator 1 (417 aa).

Residues methionine 1–serine 40 constitute a DNA-binding region (copper-fist). Residues cysteine 11, cysteine 14, cysteine 23, and histidine 25 each coordinate Zn(2+). 2 disordered regions span residues phenylalanine 128 to proline 198 and tyrosine 216 to histidine 242. Serine 143 carries the post-translational modification Phosphoserine. Over residues serine 153 to serine 178 the composition is skewed to basic and acidic residues. Composition is skewed to polar residues over residues glutamine 179 to alanine 190 and glutamate 228 to isoleucine 238. 2 repeat units span residues cysteine 264–histidine 279 and cysteine 322–histidine 337. Residues cysteine 264–histidine 337 are 2 X 16 AA repeat of C-X-C-X(4)-C-X-C-X-X-C-X-X-H.

It is found in the nucleus. Functionally, regulatory protein involved in Cu/Fe utilization and stress resistance. Involved in basal level transcription of FRE1 and H(2)O(2)-induced transcription of CTT1. Regulates the transcription of CTR1 and CTR3 via the copper ion responsive elements in their promoters. Required for degradation of CTR1. The polypeptide is Metal-binding activator 1 (MAC1) (Saccharomyces cerevisiae (strain ATCC 204508 / S288c) (Baker's yeast)).